Here is a 96-residue protein sequence, read N- to C-terminus: Co-chaperonin GroES (96 aa).

Belongs to the GroES chaperonin family. As to quaternary structure, heptamer of 7 subunits arranged in a ring. Interacts with the chaperonin GroEL.

The protein localises to the cytoplasm. Together with the chaperonin GroEL, plays an essential role in assisting protein folding. The GroEL-GroES system forms a nano-cage that allows encapsulation of the non-native substrate proteins and provides a physical environment optimized to promote and accelerate protein folding. GroES binds to the apical surface of the GroEL ring, thereby capping the opening of the GroEL channel. The sequence is that of Co-chaperonin GroES from Haemophilus influenzae (strain PittEE).